A 155-amino-acid chain; its full sequence is MFEVRRLQINYKTLEEFQKFREFGLEELSMKEDLEANIVENDSESPFYGIYDNDLLVARMSLYKIDGKYDRYFQPAQDYYELWKLEVLPDYRSKDYGTALVNHAKSFGAPIKTNSRCRADDFWLKMGFTPVKYNLMRDRGENPYVWLPESVELQD.

An N-acetyltransferase domain is found at 7 to 154 (LQINYKTLEE…VWLPESVELQ (148 aa)).

This is an uncharacterized protein from Brevibacillus brevis (strain 47 / JCM 6285 / NBRC 100599).